We begin with the raw amino-acid sequence, 417 residues long: NADH-quinone oxidoreductase subunit D (417 aa).

Belongs to the complex I 49 kDa subunit family. NDH-1 is composed of 14 different subunits. Subunits NuoB, C, D, E, F, and G constitute the peripheral sector of the complex.

It is found in the cell inner membrane. It carries out the reaction a quinone + NADH + 5 H(+)(in) = a quinol + NAD(+) + 4 H(+)(out). NDH-1 shuttles electrons from NADH, via FMN and iron-sulfur (Fe-S) centers, to quinones in the respiratory chain. The immediate electron acceptor for the enzyme in this species is believed to be ubiquinone. Couples the redox reaction to proton translocation (for every two electrons transferred, four hydrogen ions are translocated across the cytoplasmic membrane), and thus conserves the redox energy in a proton gradient. The polypeptide is NADH-quinone oxidoreductase subunit D (Cupriavidus taiwanensis (strain DSM 17343 / BCRC 17206 / CCUG 44338 / CIP 107171 / LMG 19424 / R1) (Ralstonia taiwanensis (strain LMG 19424))).